We begin with the raw amino-acid sequence, 51 residues long: Sperm protamine P1 (51 aa).

Cystine bridges form between cysteine 7–cysteine 15 and cysteine 40–cysteine 48.

Belongs to the protamine P1 family. As to quaternary structure, cross-linked by interchain disulfide bonds around the DNA-helix. In terms of processing, phosphorylated by SRPK1. Testis.

The protein resides in the nucleus. It is found in the chromosome. Functionally, protamines substitute for histones in the chromatin of sperm during the haploid phase of spermatogenesis. They compact sperm DNA into a highly condensed, stable and inactive complex. In Bos taurus (Bovine), this protein is Sperm protamine P1 (PRM1).